The sequence spans 159 residues: Cell number regulator 4 (159 aa).

A helical membrane pass occupies residues 52-74 (LAGLLYCLLLHAGVAVVPCHCIY).

This sequence belongs to the cornifelin family. In terms of tissue distribution, expressed in roots, coleoptiles, leaves, stalks, apical meristems, immature ears, endosperm, pericarp and tassel spikelets.

The protein resides in the membrane. The protein is Cell number regulator 4 (CNR4) of Zea mays (Maize).